The sequence spans 506 residues: Cytochrome P450 6a8 (506 aa).

Cys451 serves as a coordination point for heme.

Belongs to the cytochrome P450 family. Requires heme as cofactor.

The protein localises to the endoplasmic reticulum membrane. It is found in the microsome membrane. Its function is as follows. Involved in the metabolism of insect hormones and in the breakdown of synthetic insecticides. The polypeptide is Cytochrome P450 6a8 (Cyp6a8) (Drosophila melanogaster (Fruit fly)).